The following is a 260-amino-acid chain: Histidinol-phosphatase (260 aa).

Mg(2+) contacts are provided by Glu67, Asp83, Ile85, and Asp86. Glu67 lines the substrate pocket. Residues 85 to 88 (IDGT), Arg185, and Asp213 each bind substrate. Asp213 is a Mg(2+) binding site.

The protein belongs to the inositol monophosphatase superfamily. Requires Mg(2+) as cofactor.

It catalyses the reaction L-histidinol phosphate + H2O = L-histidinol + phosphate. It functions in the pathway amino-acid biosynthesis; L-histidine biosynthesis; L-histidine from 5-phospho-alpha-D-ribose 1-diphosphate: step 8/9. In terms of biological role, catalyzes the dephosphorylation of histidinol-phosphate to histidinol, the direct precursor of histidine. The chain is Histidinol-phosphatase (hisN) from Mycobacterium tuberculosis (strain ATCC 25618 / H37Rv).